The primary structure comprises 312 residues: MDSVIAFDRSPMFRVYKSGRIERLLGETTVPPSLTPQNGVVSKDIIHSPEKNLSLRIYLPEKVTVKKLPILIYFHGGGFIIETAFSPPYHTFLTSAVAAANCLAISVNYRRAPEFPVPIPYEDSWDSLKWVLTHITGTGPETWINKHGDFGKVFLAGDSAGGNISHHLTMRAKKEKLCDSLISGIILIHPYFWSKTPIDEFEVRDVGKTKGVEGSWRVASPNSKQGVDDPWLNVVGSDPSGLGCGRVLVMVAGDDLFVRQGWCYAEKLKKSGWEGEVEVMETKNEGHVFHLKNPNSDNARQVVKKLEEFINK.

Methionine 1 bears the N-acetylmethionine mark. Residues 75–77 carry the Involved in the stabilization of the negatively charged intermediate by the formation of the oxyanion hole motif; that stretch reads HGG. Active-site residues include serine 159, aspartate 255, and histidine 287.

The protein belongs to the 'GDXG' lipolytic enzyme family. Expressed in leaves, stems, flowers and siliques.

The enzyme catalyses a carboxylic ester + H2O = an alcohol + a carboxylate + H(+). In terms of biological role, carboxylesterase acting on esters with varying acyl chain length. This Arabidopsis thaliana (Mouse-ear cress) protein is Probable carboxylesterase 7 (CXE7).